We begin with the raw amino-acid sequence, 876 residues long: MAP7 domain-containing protein 3 (876 aa).

Met-1 carries the post-translational modification N-acetylmethionine. A coiled-coil region spans residues 65–144; that stretch reads NDIKQRLARE…DEAQKEKFTA (80 aa). Disordered regions lie at residues 72–137 and 170–246; these read ARER…KDEA and AMAN…KPRV. Residues 171-183 show a composition bias toward polar residues; the sequence is MANSESKTANKRS. Position 185 is a phosphoserine (Ser-185). Over residues 191 to 211 the composition is skewed to polar residues; that stretch reads QGTSALIRQMPLSSAGLQNSV. Over residues 214–244 the composition is skewed to basic and acidic residues; it reads RKTDKERSSSLNRRDSNLHSSTDKEQAERKP. Ser-322 is subject to Phosphoserine. The interval 407–475 is disordered; sequence EAAPEGSLEA…ARDAPKKSEM (69 aa). Basic and acidic residues predominate over residues 425-438; the sequence is APKESVKGSPKESM. Ser-441, Ser-457, and Ser-461 each carry phosphoserine. The segment covering 465–475 has biased composition (basic and acidic residues); that stretch reads KARDAPKKSEM. Phosphoserine is present on Ser-490. Disordered stretches follow at residues 509-533, 613-697, and 723-754; these read SPISTNRQIQKNCPPSPLPLISKQS, QREK…KKEH, and RKTDVNASKVTETSSHDIYEEAEADNEESDKD. Residues 510–521 are compositionally biased toward polar residues; that stretch reads PISTNRQIQKNC. Ser-524 carries the phosphoserine modification. Coiled-coil stretches lie at residues 558–640 and 689–724; these read VKKK…MAKE and EADKRKKEHERIMLQNLQERLERKKRIEEIMKRTRK. Composition is skewed to basic and acidic residues over residues 613-639 and 680-697; these read QREKEEEERQREEMQQRVIKKSKDMAK and GDAKIKAQEEADKRKKEH. Residues 742–752 are compositionally biased toward acidic residues; sequence EEAEADNEESD. 2 positions are modified to phosphoserine: Ser-770 and Ser-817. The interval 802–876 is disordered; sequence PKTYFNGDLK…LPKSSDTFRQ (75 aa). Over residues 820–830 the composition is skewed to polar residues; sequence DTSIQEVVSRP. Residues 831 to 842 are compositionally biased toward basic residues; that stretch reads SSKRMTSHTTKT. Ser-832 is subject to Phosphoserine. The span at 848-860 shows a compositional bias: polar residues; that stretch reads TNTTSRSSAQTKS. The segment covering 861 to 876 has biased composition (basic and acidic residues); the sequence is EGFHDILPKSSDTFRQ.

The protein belongs to the MAP7 family. Interacts (via N-terminus coiled coil domains) with tubulin and microtubules.

It is found in the cytoplasm. Its subcellular location is the cytoskeleton. The protein localises to the spindle. In terms of biological role, promotes the assembly and stability of microtubules. This is MAP7 domain-containing protein 3 (MAP7D3) from Homo sapiens (Human).